We begin with the raw amino-acid sequence, 258 residues long: Acetylglutamate kinase (258 aa).

Substrate is bound by residues 41–42 (GG), Arg63, and Asn156.

This sequence belongs to the acetylglutamate kinase family. ArgB subfamily.

The protein resides in the cytoplasm. The catalysed reaction is N-acetyl-L-glutamate + ATP = N-acetyl-L-glutamyl 5-phosphate + ADP. The protein operates within amino-acid biosynthesis; L-arginine biosynthesis; N(2)-acetyl-L-ornithine from L-glutamate: step 2/4. Its function is as follows. Catalyzes the ATP-dependent phosphorylation of N-acetyl-L-glutamate. This Bacillus velezensis (strain DSM 23117 / BGSC 10A6 / LMG 26770 / FZB42) (Bacillus amyloliquefaciens subsp. plantarum) protein is Acetylglutamate kinase.